A 152-amino-acid chain; its full sequence is FMN reductase (NADH) RutF (152 aa).

This sequence belongs to the non-flavoprotein flavin reductase family. RutF subfamily.

It carries out the reaction FMNH2 + NAD(+) = FMN + NADH + 2 H(+). Catalyzes the reduction of FMN to FMNH2 which is used to reduce pyrimidine by RutA via the Rut pathway. The chain is FMN reductase (NADH) RutF from Shigella flexneri.